We begin with the raw amino-acid sequence, 377 residues long: Putative F-box protein At1g70380 (377 aa).

Positions 3-48 (NTSFETLALDMQIEILARLPLKYLMRCMCVSKKWASLIRGEDFRSA) constitute an F-box domain.

The polypeptide is Putative F-box protein At1g70380 (Arabidopsis thaliana (Mouse-ear cress)).